The chain runs to 213 residues: 3-demethoxyubiquinol 3-hydroxylase (213 aa).

Positions 62, 92, 95, 144, 176, and 179 each coordinate Fe cation.

It belongs to the COQ7 family. It depends on Fe cation as a cofactor.

It is found in the cell membrane. The enzyme catalyses a 5-methoxy-2-methyl-3-(all-trans-polyprenyl)benzene-1,4-diol + AH2 + O2 = a 3-demethylubiquinol + A + H2O. It participates in cofactor biosynthesis; ubiquinone biosynthesis. Its function is as follows. Catalyzes the hydroxylation of 2-nonaprenyl-3-methyl-6-methoxy-1,4-benzoquinol during ubiquinone biosynthesis. The polypeptide is 3-demethoxyubiquinol 3-hydroxylase (Chromohalobacter salexigens (strain ATCC BAA-138 / DSM 3043 / CIP 106854 / NCIMB 13768 / 1H11)).